Consider the following 607-residue polypeptide: UvrABC system protein C (607 aa).

Residues 16-94 (GRPGVYRMFD…IKEWRPPYNI (79 aa)) enclose the GIY-YIG domain. A UVR domain is found at 203–238 (NALTDELSAGMEQAASTLDFEKAAELRDQISLLRRV).

This sequence belongs to the UvrC family. Interacts with UvrB in an incision complex.

The protein localises to the cytoplasm. Functionally, the UvrABC repair system catalyzes the recognition and processing of DNA lesions. UvrC both incises the 5' and 3' sides of the lesion. The N-terminal half is responsible for the 3' incision and the C-terminal half is responsible for the 5' incision. The sequence is that of UvrABC system protein C from Pseudomonas protegens (strain DSM 19095 / LMG 27888 / CFBP 6595 / CHA0).